Reading from the N-terminus, the 88-residue chain is Small ribosomal subunit protein uS15 (88 aa).

This sequence belongs to the universal ribosomal protein uS15 family. As to quaternary structure, part of the 30S ribosomal subunit. Forms a bridge to the 50S subunit in the 70S ribosome, contacting the 23S rRNA.

Its function is as follows. One of the primary rRNA binding proteins, it binds directly to 16S rRNA where it helps nucleate assembly of the platform of the 30S subunit by binding and bridging several RNA helices of the 16S rRNA. In terms of biological role, forms an intersubunit bridge (bridge B4) with the 23S rRNA of the 50S subunit in the ribosome. This chain is Small ribosomal subunit protein uS15, found in Mesomycoplasma flocculare (Mycoplasma flocculare).